Here is a 72-residue protein sequence, read N- to C-terminus: TKCYITPDVKSETCPDGENICYTKSWCDVFCTSRGKRIDLGCAATCPKVKPGVDIKCCSTDNCNPFTPWKRH.

Intrachain disulfides connect C3/C21, C14/C42, C27/C31, C46/C57, and C58/C63.

It belongs to the three-finger toxin family. Long-chain subfamily. Type II alpha-neurotoxin sub-subfamily. In terms of tissue distribution, expressed by the venom gland.

The protein localises to the secreted. Binds with high affinity to muscular (alpha-1/CHRNA1) and neuronal (alpha-7/CHRNA7) nicotinic acetylcholine receptor (nAChR) and inhibits acetylcholine from binding to the receptor, thereby impairing neuromuscular and neuronal transmission. The chain is Long neurotoxin OH-17 from Ophiophagus hannah (King cobra).